The primary structure comprises 306 residues: Pantothenate kinase (306 aa).

Residue 91–98 (GSVAVGKS) coordinates ATP.

Belongs to the prokaryotic pantothenate kinase family.

The protein localises to the cytoplasm. It carries out the reaction (R)-pantothenate + ATP = (R)-4'-phosphopantothenate + ADP + H(+). It functions in the pathway cofactor biosynthesis; coenzyme A biosynthesis; CoA from (R)-pantothenate: step 1/5. This Streptococcus equi subsp. zooepidemicus (strain H70) protein is Pantothenate kinase.